The following is a 61-amino-acid chain: Small ribosomal subunit protein uS14 (61 aa).

The Zn(2+) site is built by cysteine 24, cysteine 27, cysteine 40, and cysteine 43.

Belongs to the universal ribosomal protein uS14 family. Zinc-binding uS14 subfamily. In terms of assembly, part of the 30S ribosomal subunit. Contacts proteins S3 and S10. Zn(2+) is required as a cofactor.

Binds 16S rRNA, required for the assembly of 30S particles and may also be responsible for determining the conformation of the 16S rRNA at the A site. This chain is Small ribosomal subunit protein uS14, found in Desulfotalea psychrophila (strain LSv54 / DSM 12343).